Reading from the N-terminus, the 612-residue chain is UvrABC system protein C (612 aa).

In terms of domain architecture, GIY-YIG spans 21-99 (HQPGVYRMYD…IKKYRPRYNV (79 aa)). The UVR domain occupies 208-243 (QQVIDELMNKMEQASTDLDFERAARFRDQIAALRKT).

It belongs to the UvrC family. As to quaternary structure, interacts with UvrB in an incision complex.

Its subcellular location is the cytoplasm. In terms of biological role, the UvrABC repair system catalyzes the recognition and processing of DNA lesions. UvrC both incises the 5' and 3' sides of the lesion. The N-terminal half is responsible for the 3' incision and the C-terminal half is responsible for the 5' incision. The polypeptide is UvrABC system protein C (Idiomarina loihiensis (strain ATCC BAA-735 / DSM 15497 / L2-TR)).